The chain runs to 431 residues: Serine/threonine-protein kinase Sgk1 (431 aa).

Positions 1–60 (MTVKTEAARDTLTYSRMRGMVAILIAFMKQRRMGLNDFIQKIANNSYACKHPEVQSILKI) are necessary for localization to the mitochondria. The interval 64–92 (QEPELMNANPSPPPSPSQQINLGPSSNPH) is disordered. At S74 the chain carries Phosphoserine. Residue S78 is modified to Phosphoserine; by MAPK7. Residues 81 to 91 (QQINLGPSSNP) are compositionally biased toward polar residues. Positions 98-355 (FHFLKVIGKG…FMEIKNHVFF (258 aa)) constitute a Protein kinase domain. ATP is bound by residues 104 to 112 (IGKGSFGKV) and K127. The Nuclear localization signal signature appears at 131-141 (KKAILKKKEEK). Residue D222 is the Proton acceptor of the active site. T256 is modified (phosphothreonine; by PDPK1). The AGC-kinase C-terminal domain maps to 356 to 431 (SLINWEDLIN…SYAPPMDSFL (76 aa)). The residue at position 369 (T369) is a Phosphothreonine; by PKA. S397, S401, and S422 each carry phosphoserine.

The protein belongs to the protein kinase superfamily. AGC Ser/Thr protein kinase family. As to quaternary structure, homodimer; disulfide-linked. Forms a trimeric complex with FBXW7 and NOTCH1. Interacts with MAPK3/ERK1, MAPK1/ERK2, MAP2K1/MEK1, MAP2K2/MEK2, NEDD4, NEDD4L, MAPT/TAU, MAPK7, CREB1, SLC9A3R2/NHERF2 and KCNJ1/ROMK1. Associates with the mammalian target of rapamycin complex 2 (mTORC2) via an interaction with MAPKAP1/SIN1. Post-translationally, regulated by phosphorylation. Activated by phosphorylation on Ser-422 by mTORC2, transforming it into a substrate for PDPK1 which phosphorylates it on Thr-256. Phosphorylation on Ser-397 and Ser-401 are also essential for its activity. Phosphorylation on Ser-78 by MAPK7 is required for growth factor-induced cell cycle progression. Ubiquitinated by NEDD4L; which promotes proteasomal degradation. Ubiquitinated by SYVN1 at the endoplasmic reticulum; which promotes rapid proteasomal degradation and maintains a high turnover rate in resting cells.

It localises to the cytoplasm. The protein localises to the nucleus. It is found in the endoplasmic reticulum membrane. The protein resides in the cell membrane. Its subcellular location is the mitochondrion. The enzyme catalyses L-seryl-[protein] + ATP = O-phospho-L-seryl-[protein] + ADP + H(+). It carries out the reaction L-threonyl-[protein] + ATP = O-phospho-L-threonyl-[protein] + ADP + H(+). Two specific sites, one in the kinase domain (Thr-256) and the other in the C-terminal regulatory region (Ser-422), need to be phosphorylated for its full activation. Phosphorylation at Ser-397 and Ser-401 are also essential for its activity. Activated by WNK1, WNK2, WNK3 and WNK4; which promote phosphorylation by mTORC2. Serine/threonine-protein kinase which is involved in the regulation of a wide variety of ion channels, membrane transporters, cellular enzymes, transcription factors, neuronal excitability, cell growth, proliferation, survival, migration and apoptosis. Plays an important role in cellular stress response. Contributes to regulation of renal Na(+) retention, renal K(+) elimination, salt appetite, gastric acid secretion, intestinal Na(+)/H(+) exchange and nutrient transport, insulin-dependent salt sensitivity of blood pressure, salt sensitivity of peripheral glucose uptake, cardiac repolarization and memory consolidation. Up-regulates Na(+) channels: SCNN1A/ENAC, SCN5A and ASIC1/ACCN2, K(+) channels: KCNJ1/ROMK1, KCNA1-5, KCNQ1-5 and KCNE1, epithelial Ca(2+) channels: TRPV5 and TRPV6, chloride channels: BSND, CLCN2 and CFTR, glutamate transporters: SLC1A3/EAAT1, SLC1A2 /EAAT2, SLC1A1/EAAT3, SLC1A6/EAAT4 and SLC1A7/EAAT5, amino acid transporters: SLC1A5/ASCT2, SLC38A1/SN1 and SLC6A19, creatine transporter: SLC6A8, Na(+)/dicarboxylate cotransporter: SLC13A2/NADC1, Na(+)-dependent phosphate cotransporter: SLC34A2/NAPI-2B, glutamate receptor: GRIK2/GLUR6. Up-regulates carriers: SLC9A3/NHE3, SLC12A1/NKCC2, SLC12A3/NCC, SLC5A3/SMIT, SLC2A1/GLUT1, SLC5A1/SGLT1 and SLC15A2/PEPT2. Regulates enzymes: GSK3A/B, PMM2 and Na(+)/K(+) ATPase, and transcription factors: CTNNB1 and nuclear factor NF-kappa-B. Stimulates sodium transport into epithelial cells by enhancing the stability and expression of SCNN1A/ENAC. This is achieved by phosphorylating the NEDD4L ubiquitin E3 ligase, promoting its interaction with 14-3-3 proteins, thereby preventing it from binding to SCNN1A/ENAC and targeting it for degradation. Regulates store-operated Ca(+2) entry (SOCE) by stimulating ORAI1 and STIM1. Regulates KCNJ1/ROMK1 directly via its phosphorylation or indirectly via increased interaction with SLC9A3R2/NHERF2. Phosphorylates MDM2 and activates MDM2-dependent ubiquitination of p53/TP53. Phosphorylates MAPT/TAU and mediates microtubule depolymerization and neurite formation in hippocampal neurons. Phosphorylates SLC2A4/GLUT4 and up-regulates its activity. Phosphorylates APBB1/FE65 and promotes its localization to the nucleus. Phosphorylates MAPK1/ERK2 and activates it by enhancing its interaction with MAP2K1/MEK1 and MAP2K2/MEK2. Phosphorylates FBXW7 and plays an inhibitory role in the NOTCH1 signaling. Phosphorylates FOXO1 resulting in its relocalization from the nucleus to the cytoplasm. Phosphorylates FOXO3, promoting its exit from the nucleus and interference with FOXO3-dependent transcription. Phosphorylates BRAF and MAP3K3/MEKK3 and inhibits their activity. Phosphorylates SLC9A3/NHE3 in response to dexamethasone, resulting in its activation and increased localization at the cell membrane. Phosphorylates CREB1. Necessary for vascular remodeling during angiogenesis. In Bos taurus (Bovine), this protein is Serine/threonine-protein kinase Sgk1 (SGK1).